The primary structure comprises 64 residues: Beta-defensin 2 (64 aa).

Residues 1 to 22 form the signal peptide; it reads MRLHHLLLVLFFVVLSAGSGFT. Intrachain disulfides connect Cys-31-Cys-60, Cys-38-Cys-53, and Cys-43-Cys-61.

It belongs to the beta-defensin family.

It localises to the secreted. Has bactericidal activity. The chain is Beta-defensin 2 (DEFB2) from Ovis aries (Sheep).